The sequence spans 961 residues: Glycine dehydrogenase (decarboxylating) (961 aa).

The residue at position 709 (Lys-709) is an N6-(pyridoxal phosphate)lysine.

The protein belongs to the GcvP family. The glycine cleavage system is composed of four proteins: P, T, L and H. Requires pyridoxal 5'-phosphate as cofactor.

The catalysed reaction is N(6)-[(R)-lipoyl]-L-lysyl-[glycine-cleavage complex H protein] + glycine + H(+) = N(6)-[(R)-S(8)-aminomethyldihydrolipoyl]-L-lysyl-[glycine-cleavage complex H protein] + CO2. Its function is as follows. The glycine cleavage system catalyzes the degradation of glycine. The P protein binds the alpha-amino group of glycine through its pyridoxal phosphate cofactor; CO(2) is released and the remaining methylamine moiety is then transferred to the lipoamide cofactor of the H protein. This is Glycine dehydrogenase (decarboxylating) from Streptomyces avermitilis (strain ATCC 31267 / DSM 46492 / JCM 5070 / NBRC 14893 / NCIMB 12804 / NRRL 8165 / MA-4680).